A 364-amino-acid polypeptide reads, in one-letter code: tRNA-specific 2-thiouridylase MnmA 1 (364 aa).

Residues 10 to 17 (GMSGGVDS) and Met36 each bind ATP. The active-site Nucleophile is the Cys106. Residues Cys106 and Cys204 are joined by a disulfide bond. Residue Gly130 participates in ATP binding. The interaction with tRNA stretch occupies residues 154–156 (KDQ). Cys204 (cysteine persulfide intermediate) is an active-site residue. The interval 310–311 (RY) is interaction with tRNA.

It belongs to the MnmA/TRMU family.

It localises to the cytoplasm. It carries out the reaction S-sulfanyl-L-cysteinyl-[protein] + uridine(34) in tRNA + AH2 + ATP = 2-thiouridine(34) in tRNA + L-cysteinyl-[protein] + A + AMP + diphosphate + H(+). Catalyzes the 2-thiolation of uridine at the wobble position (U34) of tRNA, leading to the formation of s(2)U34. This is tRNA-specific 2-thiouridylase MnmA 1 from Thermoanaerobacter pseudethanolicus (strain ATCC 33223 / 39E) (Clostridium thermohydrosulfuricum).